The primary structure comprises 378 residues: Acetylornithine deacetylase (378 aa).

Histidine 76 serves as a coordination point for Zn(2+). Residue aspartate 78 is part of the active site. Aspartate 108 is a Zn(2+) binding site. Glutamate 140 is a catalytic residue. Zn(2+) contacts are provided by glutamate 141, glutamate 165, and histidine 351.

Belongs to the peptidase M20A family. ArgE subfamily. As to quaternary structure, homodimer. The cofactor is Zn(2+). Co(2+) serves as cofactor. It depends on glutathione as a cofactor.

The protein resides in the cytoplasm. It catalyses the reaction N(2)-acetyl-L-ornithine + H2O = L-ornithine + acetate. It functions in the pathway amino-acid biosynthesis; L-arginine biosynthesis; L-ornithine from N(2)-acetyl-L-ornithine (linear): step 1/1. Catalyzes the hydrolysis of the amide bond of N(2)-acetylated L-amino acids. Cleaves the acetyl group from N-acetyl-L-ornithine to form L-ornithine, an intermediate in L-arginine biosynthesis pathway, and a branchpoint in the synthesis of polyamines. The sequence is that of Acetylornithine deacetylase from Vibrio parahaemolyticus serotype O3:K6 (strain RIMD 2210633).